The following is a 68-amino-acid chain: Figainin 1 (68 aa).

A signal peptide spans 1-22 (MAFLKKSLFLVLFLGLVSLSIG). The interval 23 to 45 (EEEKREEEEKNEEGANQEENAEN) is disordered. Residues 23 to 47 (EEEKREEEEKNEEGANQEENAENKE) constitute a propeptide that is removed on maturation. The span at 26 to 42 (KREEEEKNEEGANQEEN) shows a compositional bias: acidic residues. Lysine amide is present on Lys-67.

In terms of tissue distribution, expressed by the skin glands.

The protein localises to the secreted. Functionally, antimicrobial peptide that displays antibacterial and antiprotozoal activity. Exhibits antibacterial activity against the Gram-positive bacteria S.epidermidis ATCC 12228 (MIC=2 uM), E.casseliflavus ATCC 700327 (MIC=16 uM), S.aureus ATCC 25923 (MIC=4 uM) and E.faecalis ATCC 29212 (MIC=8 uM), and the Gram-negative bacteria E.coli ATCC 25922 (MIC=16 uM) and K.pneumoniae ATCC 13883 (MIC=4 uM). Displays antiprotozoal activity against the epimastigote form of T.cruzi (IC(50)=15.9 uM). Does not show antimicrobial activity against the Gram-negative bacterium P.aeruginosa ATCC 27853, or the fungi C.albicans ATCC 90028 and C.parapsilosis ATCC 22019. Shows high cytolytic activity against human erythrocytes (HC(50)=10 uM), and displays anti-proliferative effects against various cancer cell lines including MCF-7 breast cancer cells (IC(50)=13.7 uM), HeLa cervical adenocarcinoma cells (IC(50)=11.1 uM) and B16F10 murine melanoma cells (IC(50)=10.5 uM). This is Figainin 1 from Boana raniceps (Chaco tree frog).